We begin with the raw amino-acid sequence, 385 residues long: S-adenosylmethionine synthase (385 aa).

H16 serves as a coordination point for ATP. D18 lines the Mg(2+) pocket. E44 serves as a coordination point for K(+). Positions 57 and 100 each coordinate L-methionine. The segment at 100 to 110 (QSPDINQGVDR) is flexible loop. ATP contacts are provided by residues 164-166 (DGK), 230-231 (KF), D239, 245-246 (RK), A262, and K266. D239 is a binding site for L-methionine. K270 lines the L-methionine pocket.

This sequence belongs to the AdoMet synthase family. As to quaternary structure, homotetramer; dimer of dimers. The cofactor is Mg(2+). K(+) serves as cofactor.

It localises to the cytoplasm. It catalyses the reaction L-methionine + ATP + H2O = S-adenosyl-L-methionine + phosphate + diphosphate. The protein operates within amino-acid biosynthesis; S-adenosyl-L-methionine biosynthesis; S-adenosyl-L-methionine from L-methionine: step 1/1. Catalyzes the formation of S-adenosylmethionine (AdoMet) from methionine and ATP. The overall synthetic reaction is composed of two sequential steps, AdoMet formation and the subsequent tripolyphosphate hydrolysis which occurs prior to release of AdoMet from the enzyme. This is S-adenosylmethionine synthase from Helicobacter pylori (strain G27).